A 196-amino-acid chain; its full sequence is Potassium-transporting ATPase KdpC subunit (196 aa).

A helical membrane pass occupies residues 7–27 (PAIVSAGLFTVLLGLAYPLAV).

The protein belongs to the KdpC family. As to quaternary structure, the system is composed of three essential subunits: KdpA, KdpB and KdpC.

The protein resides in the cell inner membrane. Its function is as follows. Part of the high-affinity ATP-driven potassium transport (or Kdp) system, which catalyzes the hydrolysis of ATP coupled with the electrogenic transport of potassium into the cytoplasm. This subunit acts as a catalytic chaperone that increases the ATP-binding affinity of the ATP-hydrolyzing subunit KdpB by the formation of a transient KdpB/KdpC/ATP ternary complex. The sequence is that of Potassium-transporting ATPase KdpC subunit from Caulobacter sp. (strain K31).